Here is a 274-residue protein sequence, read N- to C-terminus: Ribosomal RNA small subunit methyltransferase A (274 aa).

Residues His15, Leu17, Gly42, Glu64, Asp89, and Asn109 each contribute to the S-adenosyl-L-methionine site.

This sequence belongs to the class I-like SAM-binding methyltransferase superfamily. rRNA adenine N(6)-methyltransferase family. RsmA subfamily.

Its subcellular location is the cytoplasm. The enzyme catalyses adenosine(1518)/adenosine(1519) in 16S rRNA + 4 S-adenosyl-L-methionine = N(6)-dimethyladenosine(1518)/N(6)-dimethyladenosine(1519) in 16S rRNA + 4 S-adenosyl-L-homocysteine + 4 H(+). Its function is as follows. Specifically dimethylates two adjacent adenosines (A1518 and A1519) in the loop of a conserved hairpin near the 3'-end of 16S rRNA in the 30S particle. May play a critical role in biogenesis of 30S subunits. The polypeptide is Ribosomal RNA small subunit methyltransferase A (Synechococcus sp. (strain RCC307)).